A 4870-amino-acid polypeptide reads, in one-letter code: Malformin synthetase mlfA (4870 aa).

Residues 106 to 497 (ERRAANRPHS…CGRADTQVKL (392 aa)) form an adenylation 1 region. The region spanning 635–711 (LGLSQLEQEI…EASSLAEVQE (77 aa)) is the Carrier 1 domain. At S672 the chain carries O-(pantetheine 4'-phosphoryl)serine. The interval 749–1133 (EDVFPCTTMQ…ALNTLTLLQA (385 aa)) is condensation 1. Residues 1161-1550 (DRWVTRQPES…GRKDTQVKLR (390 aa)) are adenylation 2. The 78-residue stretch at 1688–1765 (TASSKLELTL…QLAAILGEAT (78 aa)) folds into the Carrier 2 domain. Residue S1725 is modified to O-(pantetheine 4'-phosphoryl)serine. Disordered regions lie at residues 1764–1794 (ATGQ…NDGV) and 1829–1859 (GSSS…VSPV). Low complexity-rich tracts occupy residues 1769–1792 (ESSA…STND) and 1830–1846 (SSSC…SSSS). The segment at 1898 to 2313 (EDIYPATALQ…GVSYRDKQTL (416 aa)) is condensation 2. The segment at 2336–2728 (VRTPHAPAVF…IGRRDGQLKL (393 aa)) is adenylation 3. The Carrier 3 domain occupies 2864-2940 (RPATAQEREM…QLMRHLSANG (77 aa)). S2901 bears the O-(pantetheine 4'-phosphoryl)serine mark. Condensation stretches follow at residues 2957-3422 (WVPL…TYDQ) and 3443-3862 (DIYP…EQLV). Residues 3887 to 4277 (HSSREAACAW…VGRKDNQIKF (391 aa)) form an adenylation 4 region. In terms of domain architecture, Carrier 4 spans 4411–4487 (MPFTAAECKM…DLAYRTANLV (77 aa)). Residue S4448 is modified to O-(pantetheine 4'-phosphoryl)serine. Positions 4524–4837 (EVLPTTSFQR…LQTIVQHQNN (314 aa)) are condensation 5.

Belongs to the NRP synthetase family.

The protein operates within secondary metabolite biosynthesis. Its function is as follows. Nonribosomal peptide synthetase; part of the gene cluster that mediates the biosynthesis of malformins, cyclic pentapeptides with a disulfide bond between 2 consecutive cysteins, that show potential anti-tumor as well as antimalarial and antitrypanosomal properties. The nonribosomal peptide synthetase mlfA is responsible of the formation of the cyclic pentapeptide. The malformin biosynthesis clusters in malformin-producing fungi also contain enzymes involved in the formation of the disulfide bond between the two consecutive cysteins within malformins, in addition to additional tailoring enzymes such as methyltransferases or oxidoreductases. They are also composed of up to 4 major facilitator superfamily transporters, and transcription factors probably involved in the regulation of the expression of those clusters. This is Malformin synthetase mlfA from Aspergillus niger (strain ATCC 1015 / CBS 113.46 / FGSC A1144 / LSHB Ac4 / NCTC 3858a / NRRL 328 / USDA 3528.7).